The sequence spans 248 residues: MALLEICCYSMECALTAQRNGADRIELCAAPKEGGLTPSLGVLRSVREHITIPVHPIIRPRGGDFYYTDGEFAAMLEDIRLVRELGFPGLVTGVLTVDGDVDMSRMEKIMAAAGPLAVTFHRAFDMCANPFNALKNLADAGVARVLTSGQKADAAQGLSIIMELIAQGDAPTIMAGAGVRANNLQNFLDAGVREVHSSAGVLLPSPMRYRNQGLSMSADIQADEYSRYRVEGAAVAEMKGIIVRHQAK.

Belongs to the CutC family. As to quaternary structure, homodimer.

The protein localises to the cytoplasm. This chain is PF03932 family protein CutC, found in Salmonella enteritidis PT4 (strain P125109).